The sequence spans 229 residues: Vacuolar protein sorting-associated protein 24 homolog 1 (229 aa).

A coiled-coil region spans residues 15-60; the sequence is KQLLRDWQRKLRQECRNIERQIRDIQKEERNVQKAIKEAAKRNDMV. A disordered region spans residues 193–215; that stretch reads VPAQKASTSREEEAVAEGVDDEE. Residues 206-215 show a composition bias toward acidic residues; it reads AVAEGVDDEE.

It belongs to the SNF7 family. As to quaternary structure, component of the endosomal sorting required for transport complex III (ESCRT-III), composed at least of VPS2, VPS20, VPS24 and VPS32. Interacts with SKD1.

It is found in the endosome. Its function is as follows. Component of the ESCRT-III complex, which is required for multivesicular bodies (MVBs) formation and sorting of endosomal cargo proteins into MVBs. The ESCRT-III complex is probably involved in the concentration of MVB cargo. In Arabidopsis thaliana (Mouse-ear cress), this protein is Vacuolar protein sorting-associated protein 24 homolog 1 (VPS24-1).